Consider the following 185-residue polypeptide: Elongation factor P (185 aa).

This sequence belongs to the elongation factor P family.

Its subcellular location is the cytoplasm. The protein operates within protein biosynthesis; polypeptide chain elongation. In terms of biological role, involved in peptide bond synthesis. Stimulates efficient translation and peptide-bond synthesis on native or reconstituted 70S ribosomes in vitro. Probably functions indirectly by altering the affinity of the ribosome for aminoacyl-tRNA, thus increasing their reactivity as acceptors for peptidyl transferase. The polypeptide is Elongation factor P (Clostridium kluyveri (strain ATCC 8527 / DSM 555 / NBRC 12016 / NCIMB 10680 / K1)).